The chain runs to 291 residues: Tyrosine recombinase XerD (291 aa).

Residues Met-1–Glu-82 form the Core-binding (CB) domain. In terms of domain architecture, Tyr recombinase spans Asn-103–Lys-285. Residues Arg-143, Lys-167, His-237, Arg-240, and His-263 contribute to the active site. Tyr-272 acts as the O-(3'-phospho-DNA)-tyrosine intermediate in catalysis.

It belongs to the 'phage' integrase family. XerD subfamily. In terms of assembly, forms a cyclic heterotetrameric complex composed of two molecules of XerC and two molecules of XerD.

The protein resides in the cytoplasm. Functionally, site-specific tyrosine recombinase, which acts by catalyzing the cutting and rejoining of the recombining DNA molecules. The XerC-XerD complex is essential to convert dimers of the bacterial chromosome into monomers to permit their segregation at cell division. It also contributes to the segregational stability of plasmids. This is Tyrosine recombinase XerD from Neisseria meningitidis serogroup A / serotype 4A (strain DSM 15465 / Z2491).